Here is a 322-residue protein sequence, read N- to C-terminus: MAEDEIWTEKYRPRRLEDVIGHQQITRRLISYVKSGNLPHLLFSGPPGVGKTACAVALARELYGETWHSNFIELNASDERGIDVVRNNIKNFARTAPLGEAKFKIIFLDEADALTSDAQSALRRTMERYAATCRFIISCNYSSKIIEPIQSRCAVYRFGPLNATDITTGITRIAKNEGLKIEKDGMDALIYVARGDMRRAINALQSAATIAKDITADVIYQTTSTAKPKEIEDMLKLALNGQFMDSRNKLDELLITYGLSGTDIIDQIYRSMFELGLDEDVLVALVDRIGEADFRLTEGASERIQIEALLAHFKMQGAARSK.

Residue 45–52 (GPPGVGKT) coordinates ATP.

It belongs to the activator 1 small subunits family. RfcS subfamily. As to quaternary structure, heteromultimer composed of small subunits (RfcS) and large subunits (RfcL).

Functionally, part of the RFC clamp loader complex which loads the PCNA sliding clamp onto DNA. In Methanocella arvoryzae (strain DSM 22066 / NBRC 105507 / MRE50), this protein is Replication factor C small subunit.